The chain runs to 162 residues: Peroxiredoxin-2B (162 aa).

Residues 4–162 form the Thioredoxin domain; it reads IAVGDVVPDG…SSADDILKAL (159 aa). Residue Cys-51 is the Cysteine sulfenic acid (-SOH) intermediate of the active site.

Belongs to the peroxiredoxin family. Prx5 subfamily. Monomer. Expressed in all tissues but mostly in reproductive tissues such as buds, flowers, siliques and seeds.

The protein resides in the cytoplasm. It catalyses the reaction [glutaredoxin]-dithiol + a hydroperoxide = [glutaredoxin]-disulfide + an alcohol + H2O. In terms of biological role, reduces hydrogen peroxide and alkyl hydroperoxides with reducing equivalents provided through the thioredoxin or glutaredoxin system. May be involved in intracellular redox signaling. Thiol-specific peroxidase that catalyzes the reduction of hydrogen peroxide and organic hydroperoxides to water and alcohols, respectively. Plays a role in cell protection against oxidative stress by detoxifying peroxides and as sensor of hydrogen peroxide-mediated signaling events. The sequence is that of Peroxiredoxin-2B (PRXIIB) from Arabidopsis thaliana (Mouse-ear cress).